Consider the following 500-residue polypeptide: Lysine--tRNA ligase (500 aa).

Positions 410 and 417 each coordinate Mg(2+).

Belongs to the class-II aminoacyl-tRNA synthetase family. Homodimer. The cofactor is Mg(2+).

The protein localises to the cytoplasm. It catalyses the reaction tRNA(Lys) + L-lysine + ATP = L-lysyl-tRNA(Lys) + AMP + diphosphate. This chain is Lysine--tRNA ligase, found in Pseudomonas putida (strain W619).